A 425-amino-acid chain; its full sequence is Histidine--tRNA ligase (425 aa).

The protein belongs to the class-II aminoacyl-tRNA synthetase family. As to quaternary structure, homodimer.

It is found in the cytoplasm. The enzyme catalyses tRNA(His) + L-histidine + ATP = L-histidyl-tRNA(His) + AMP + diphosphate + H(+). The chain is Histidine--tRNA ligase from Histophilus somni (strain 2336) (Haemophilus somnus).